We begin with the raw amino-acid sequence, 304 residues long: Ribonuclease Z (304 aa).

Residues H63, H65, D67, H68, H141, D208, and H266 each contribute to the Zn(2+) site. D67 acts as the Proton acceptor in catalysis.

It belongs to the RNase Z family. In terms of assembly, homodimer. Zn(2+) serves as cofactor.

The enzyme catalyses Endonucleolytic cleavage of RNA, removing extra 3' nucleotides from tRNA precursor, generating 3' termini of tRNAs. A 3'-hydroxy group is left at the tRNA terminus and a 5'-phosphoryl group is left at the trailer molecule.. In terms of biological role, zinc phosphodiesterase, which displays some tRNA 3'-processing endonuclease activity. Probably involved in tRNA maturation, by removing a 3'-trailer from precursor tRNA. The protein is Ribonuclease Z of Chlamydia trachomatis serovar L2 (strain ATCC VR-902B / DSM 19102 / 434/Bu).